The chain runs to 87 residues: LYR motif-containing protein 2 (87 aa).

Residues 1 to 19 (MGSRLPPAALTLKQFLVRQ) constitute a mitochondrion transit peptide.

Belongs to the complex I LYR family.

The protein resides in the mitochondrion. In terms of biological role, involved in efficient integration of the N-module into mitochondrial respiratory chain complex I. This is LYR motif-containing protein 2 (lyrm2) from Xenopus laevis (African clawed frog).